A 400-amino-acid polypeptide reads, in one-letter code: Capsid protein (400 aa).

Polar residues predominate over residues M1–L10. The interval M1 to P54 is disordered. Residues I16 to P28 show a composition bias toward acidic residues.

This sequence belongs to the potexvirus capsid protein family.

The protein localises to the virion. Its function is as follows. Required for genome encapsidation. This chain is Capsid protein (ORF3), found in Botryotinia fuckeliana (Noble rot fungus).